A 562-amino-acid chain; its full sequence is Potassium-transporting ATPase potassium-binding subunit (562 aa).

Transmembrane regions (helical) follow at residues F6–F26, A63–M83, G132–I152, L175–L195, F253–V273, L283–L303, F327–V347, A356–V376, G379–G399, M416–L436, L483–I503, and L526–A546.

The protein belongs to the KdpA family. The system is composed of three essential subunits: KdpA, KdpB and KdpC.

The protein resides in the cell inner membrane. In terms of biological role, part of the high-affinity ATP-driven potassium transport (or Kdp) system, which catalyzes the hydrolysis of ATP coupled with the electrogenic transport of potassium into the cytoplasm. This subunit binds the periplasmic potassium ions and delivers the ions to the membrane domain of KdpB through an intramembrane tunnel. This Yersinia enterocolitica serotype O:8 / biotype 1B (strain NCTC 13174 / 8081) protein is Potassium-transporting ATPase potassium-binding subunit.